We begin with the raw amino-acid sequence, 546 residues long: Chaperonin GroEL (546 aa).

ATP is bound by residues 30–33, K51, 87–91, G415, 479–481, and D495; these read TLGP, DGTTT, and NAA. Residues 526–546 are disordered; the sequence is KKDEPAMPAGGGMGGMGGMDF. Residues 534–546 show a composition bias toward gly residues; that stretch reads AGGGMGGMGGMDF.

Belongs to the chaperonin (HSP60) family. Forms a cylinder of 14 subunits composed of two heptameric rings stacked back-to-back. Interacts with the co-chaperonin GroES.

Its subcellular location is the cytoplasm. The catalysed reaction is ATP + H2O + a folded polypeptide = ADP + phosphate + an unfolded polypeptide.. Together with its co-chaperonin GroES, plays an essential role in assisting protein folding. The GroEL-GroES system forms a nano-cage that allows encapsulation of the non-native substrate proteins and provides a physical environment optimized to promote and accelerate protein folding. In Xanthomonas campestris pv. campestris (strain 8004), this protein is Chaperonin GroEL.